Here is a 307-residue protein sequence, read N- to C-terminus: Estrogen receptor (307 aa).

The nuclear receptor DNA-binding region spans 1-43 (GHNDYMCPATNQCTIDKNRRKSCQACRLRKCYEVGMMKGGIRK). The segment at 7 to 31 (CPATNQCTIDKNRRKSCQACRLRKC) adopts an NR C4-type zinc-finger fold. A hinge region spans residues 44-95 (DRRGGRILKHKRQREEHDNRNAGAIVERRSPNLWPSPLMITHNKKNSPALSL). One can recognise an NR LBD domain in the interval 96–307 (TADQIVSALL…HFRHMSNKGM (212 aa)).

The protein belongs to the nuclear hormone receptor family. NR3 subfamily. As to quaternary structure, binds DNA as a homodimer. Can form a heterodimer with ER-beta.

It localises to the nucleus. The steroid hormones and their receptors are involved in the regulation of eukaryotic gene expression and affect cellular proliferation and differentiation in target tissues. In Aspidoscelis uniparens (Desert grassland whiptail lizard), this protein is Estrogen receptor (ESR1).